We begin with the raw amino-acid sequence, 572 residues long: 3-ketosteroid oxygenase (572 aa).

Helical transmembrane passes span 52–72 (AFAL…RNFL) and 84–104 (YFMR…FIRI).

This sequence belongs to the cytochrome P450 family. In terms of tissue distribution, expressed in the 2 embryonic head hypodermal cells XXXL/R.

It is found in the membrane. It carries out the reaction 5alpha-cholest-7-en-3-one + 3 reduced [NADPH--hemoprotein reductase] + 3 O2 = (25S)-Delta7-dafachronate + 3 oxidized [NADPH--hemoprotein reductase] + 4 H2O + 4 H(+). The enzyme catalyses cholest-4-en-3-one + 3 reduced [NADPH--hemoprotein reductase] + 3 O2 = (25S)-3-oxocholest-4-en-26-oate + 3 oxidized [NADPH--hemoprotein reductase] + 4 H2O + 4 H(+). Its pathway is steroid hormone biosynthesis; dafachronic acid biosynthesis. In terms of biological role, converts the 3-keto steroids 4-cholesten-3-one and lathosterone into the carboxylic metabolites 3-keto-4-cholestenate (Delta(4)-dafachronic acid, Delta(4)-DA) and 3-keto-7,(5a)-cholestenate (Delta(7)-dafachronic acid, Delta(7)-DA) respectively, by catalyzing successive oxidations at C-26. Dafachronic acids bind directly to the nuclear hormone receptor (NHR) DAF-12, suppressing dauer formation and inducing reproductive growth. In a non-cell autonomous manner, negatively regulates body wall muscle arm extensions to motor neurons probably by preventing daf-12 isoform b activation. May be involved in thermotolerance. This is 3-ketosteroid oxygenase (daf-9) from Caenorhabditis elegans.